Here is a 499-residue protein sequence, read N- to C-terminus: MFSRRNLVALGLAATVSAGPCDIYEAGDTPCVAAHSTTRALYSSFSGALYQLQRGSDDTTTTISPLTAGGVADASAQDTFCANTTCLITIIYDQSGNGNHLTQAPPGGFDGPDVDGYDNLASAIGAPVTLNGQKAYGVFMSPGTGYRNNEATGTATGDEPEGMYAVLDGTHYNDACCFDYGNAETSSTDTGAGHMEAIYLGNSTTWGYGAGDGPWIMVDMENNLFSGADEGYNSGDPSISYSFVTAAVKGGADKWAIRGGNAASGSLSTYYSGARPDYSGYNPMSKEGAIILGIGGDNSNGAQGTFYEGVMTSGYPSDDVENSVQENIVAAKYVSGSLVSGPSFTSGEVVSLRVTTPGYTTRYIAHTDTTVNTQVVDDDSSTTLKEEASWTVVTGLANSQCFSFESVDTPGSYIRHYNFELLLNANDGTKQFHEDATFCPQAPLNGEGTSLRSWSYPTRYFRHYENVLYAASNGGVQTFDSKTSFNNDVSFEIETAFAS.

A signal peptide spans 1–18 (MFSRRNLVALGLAATVSA). 2 N-linked (GlcNAc...) asparagine glycosylation sites follow: Asn-83 and Asn-202.

This sequence belongs to the glycosyl hydrolase 54 family.

It catalyses the reaction Hydrolysis of terminal non-reducing alpha-L-arabinofuranoside residues in alpha-L-arabinosides.. Its pathway is glycan metabolism; L-arabinan degradation. Able to hydrolyze 1,5-, 1,3- and 1,2-alpha-linkages not only in L-arabinofuranosyl oligosaccharides, but also in polysac-charides containing terminal non-reducing L-arabinofuranoses in side chains, like L-arabinan, arabinogalactan and arabinoxylan. This Aspergillus niger protein is Alpha-L-arabinofuranosidase B (abfB).